Consider the following 129-residue polypeptide: Small ribosomal subunit protein uS11 (129 aa).

Belongs to the universal ribosomal protein uS11 family. As to quaternary structure, part of the 30S ribosomal subunit. Interacts with proteins S7 and S18. Binds to IF-3.

Functionally, located on the platform of the 30S subunit, it bridges several disparate RNA helices of the 16S rRNA. Forms part of the Shine-Dalgarno cleft in the 70S ribosome. This chain is Small ribosomal subunit protein uS11, found in Methylobacterium sp. (strain 4-46).